A 1234-amino-acid polypeptide reads, in one-letter code: DNA-directed RNA polymerase subunit beta (1234 aa).

The interval 1187 to 1234 (GREDAPPEEVYEEEYEEEPEELPEDIDFEPDNFDIDSEDLFMDDDYDG) is disordered. Acidic residues predominate over residues 1192 to 1234 (PPEEVYEEEYEEEPEELPEDIDFEPDNFDIDSEDLFMDDDYDG).

This sequence belongs to the RNA polymerase beta chain family. In terms of assembly, the RNAP catalytic core consists of 2 alpha, 1 beta, 1 beta' and 1 omega subunit. When a sigma factor is associated with the core the holoenzyme is formed, which can initiate transcription.

The enzyme catalyses RNA(n) + a ribonucleoside 5'-triphosphate = RNA(n+1) + diphosphate. In terms of biological role, DNA-dependent RNA polymerase catalyzes the transcription of DNA into RNA using the four ribonucleoside triphosphates as substrates. This Caldanaerobacter subterraneus subsp. tengcongensis (strain DSM 15242 / JCM 11007 / NBRC 100824 / MB4) (Thermoanaerobacter tengcongensis) protein is DNA-directed RNA polymerase subunit beta.